Consider the following 429-residue polypeptide: Autophagy-related protein 18 (429 aa).

7 WD repeats span residues 1 to 36 (MAMNFVTFNQDYSYLAVATSKGFRIFTTDPFAKSYE), 69 to 114 (KRQS…LLYT), 139 to 182 (PLPQ…AINV), 185 to 225 (AHRS…KLYQ), 230 to 269 (SMPSRIFSMSFNTTSTLLCVSSSTETIHLFKLSHPTSSPD), 309 to 355 (KHNG…AWFK), and 367 to 407 (VNNG…GGEG). The short motif at 226-230 (FRRGS) is the L/FRRG motif element. Residues 262 to 275 (SHPTSSPDASPSSP) are compositionally biased toward low complexity. A disordered region spans residues 262–308 (SHPTSSPDASPSSPVGRDRSLSQSSSGYSPDRGDLTGDVGSSDFPAR).

This sequence belongs to the WD repeat PROPPIN family. In terms of assembly, component of the PI(3,5)P2 regulatory complex.

Its subcellular location is the preautophagosomal structure membrane. It localises to the vacuole membrane. It is found in the endosome membrane. Its function is as follows. The PI(3,5)P2 regulatory complex regulates both the synthesis and turnover of phosphatidylinositol 3,5-bisphosphate (PtdIns(3,5)P2). Necessary for proper vacuole morphology. Plays an important role in osmotically-induced vacuole fragmentation. Required for cytoplasm to vacuole transport (Cvt) vesicle formation, pexophagy and starvation-induced autophagy. Involved in correct atg9 trafficking to the pre-autophagosomal structure. Might also be involved in premeiotic DNA replication. The polypeptide is Autophagy-related protein 18 (atg18) (Neosartorya fischeri (strain ATCC 1020 / DSM 3700 / CBS 544.65 / FGSC A1164 / JCM 1740 / NRRL 181 / WB 181) (Aspergillus fischerianus)).